The following is a 28-amino-acid chain: ALWKTLLKNVGKAAGKAALNAVTDMVNQ.

Expressed by the skin glands.

It localises to the secreted. Functionally, has antibacterial activity against the Gram-positive bacteria S.aureus and E.faecalis, and the Gram-negative bacteria P.aeruginosa and E.coli. Has antiprotozoal activity against T.cruzi. Has antifungal activity against the yeasts C.tropicalis (MIC=10.9 uM), C.guilliermondii (MIC=21.8 uM), C.albicans (MIC=21.8 uM) and C.albicans ATCC 1023 (MIC=10.9 uM). Decreases viability of murine peritoneal cells. Fuses to, and disrupts liposomes. The protein is Dermaseptin-DI2 of Phyllomedusa distincta (Monkey frog).